The sequence spans 313 residues: MSWANESITGEFVLLGFSDQPWLEFPLFVVFLTSYIVTIFGNLNIILVSHLDPKLHTPMYFFLTNLSVIDLCYITCTVPQMLVNLRSIRKVISFGGCVVQLFMFLALGATECVLLPVMSFDRFVAICRPLHYSVIMHQRLCLQLAAVSWIIGFGNSVWLSILTLQLPRCGHYVIDHFLCEVPALLKLSCVDVTANEAELFFVSVFFHLTPLSLILTSYAFIARAILKIQSAEGRQKAFGTCSSHLIVVSLFYGTALSVYFLPPSPHSKNRRKMVPLFYGIIAPMLNPLIYTLRNKEVKDAFKRLIKRVFLSKN.

The Extracellular portion of the chain corresponds to 1-27 (MSWANESITGEFVLLGFSDQPWLEFPL). N-linked (GlcNAc...) asparagine glycosylation is present at N5. The chain crosses the membrane as a helical span at residues 28-48 (FVVFLTSYIVTIFGNLNIILV). Over 49–57 (SHLDPKLHT) the chain is Cytoplasmic. A helical membrane pass occupies residues 58–78 (PMYFFLTNLSVIDLCYITCTV). At 79 to 97 (PQMLVNLRSIRKVISFGGC) the chain is on the extracellular side. An intrachain disulfide couples C97 to C189. A helical membrane pass occupies residues 98-118 (VVQLFMFLALGATECVLLPVM). The Cytoplasmic segment spans residues 119-143 (SFDRFVAICRPLHYSVIMHQRLCLQ). A helical membrane pass occupies residues 144–164 (LAAVSWIIGFGNSVWLSILTL). Residues 165–200 (QLPRCGHYVIDHFLCEVPALLKLSCVDVTANEAELF) lie on the Extracellular side of the membrane. A helical membrane pass occupies residues 201 to 221 (FVSVFFHLTPLSLILTSYAFI). The Cytoplasmic segment spans residues 222–244 (ARAILKIQSAEGRQKAFGTCSSH). The helical transmembrane segment at 245–265 (LIVVSLFYGTALSVYFLPPSP) threads the bilayer. Residues 266 to 271 (HSKNRR) lie on the Extracellular side of the membrane. A helical transmembrane segment spans residues 272-292 (KMVPLFYGIIAPMLNPLIYTL). Over 293 to 313 (RNKEVKDAFKRLIKRVFLSKN) the chain is Cytoplasmic.

Belongs to the G-protein coupled receptor 1 family.

It is found in the cell membrane. Functionally, odorant receptor. In Mus musculus (Mouse), this protein is Olfactory receptor 2B6.